We begin with the raw amino-acid sequence, 70 residues long: Small ribosomal subunit protein bS21C (70 aa).

It belongs to the bacterial ribosomal protein bS21 family.

The polypeptide is Small ribosomal subunit protein bS21C (Burkholderia pseudomallei (strain 1710b)).